Consider the following 690-residue polypeptide: NF-kappa-B-repressing factor (690 aa).

The interval 1-296 (MEKILHMAEG…FKHIIGEDLV (296 aa)) is active repression domain. The short motif at 25-45 (KPSKGQKRYLSTYDGQNPPKK) is the Nuclear localization signal element. Disordered stretches follow at residues 27–49 (SKGQ…QAGS), 65–85 (SSSK…DVNG), and 133–160 (YFDS…PPSQ). A Glycyl lysine isopeptide (Lys-Gly) (interchain with G-Cter in SUMO2) cross-link involves residue Lys68. Polar residues predominate over residues 139 to 150 (PAPSSTSQQANC). A DNA-binding region spans residues 296-388 (VVCQIGMLSY…RVFLQDHCLA (93 aa)). The span at 414–425 (PTYPSVKSSQCH) shows a compositional bias: polar residues. The segment at 414–436 (PTYPSVKSSQCHSGSSPKGSGKK) is disordered. Lys500 is covalently cross-linked (Glycyl lysine isopeptide (Lys-Gly) (interchain with G-Cter in SUMO2)). A G-patch domain is found at 551 to 596 (EDNIGNQLLRKMGWTGGGLGKSGEGIREPISVKEQHKREGLGLDVE). The R3H domain occupies 600–664 (KIAKRDIEQI…DRYLVVGRKR (65 aa)). Position 618 is a phosphoserine (Ser618). Glycyl lysine isopeptide (Lys-Gly) (interchain with G-Cter in SUMO2) cross-links involve residues Lys666 and Lys674.

Interacts with NF-kappa-B. Interacts with XRN2. Interacts (via G-patch domain) with DHX15; promoting the RNA helicase activity of DHX15.

It is found in the nucleus. The protein resides in the nucleolus. In terms of biological role, enhances the ATPase activity of DHX15 by acting like a brace that tethers mobile sections of DHX15 together, stabilizing a functional conformation with high RNA affinity of DHX15. Involved in the constitutive silencing of the interferon beta promoter, independently of the virus-induced signals, and in the inhibition of the basal and cytokine-induced iNOS promoter activity. Also involved in the regulation of IL-8 transcription. May also act as a DNA-binding transcription regulator: interacts with a specific negative regulatory element (NRE) 5'-AATTCCTCTGA-3' to mediate transcriptional repression of certain NK-kappa-B responsive genes. In Mus musculus (Mouse), this protein is NF-kappa-B-repressing factor (Nkrf).